A 426-amino-acid polypeptide reads, in one-letter code: Gamma-glutamyl phosphate reductase (426 aa).

The protein belongs to the gamma-glutamyl phosphate reductase family.

The protein resides in the cytoplasm. The catalysed reaction is L-glutamate 5-semialdehyde + phosphate + NADP(+) = L-glutamyl 5-phosphate + NADPH + H(+). The protein operates within amino-acid biosynthesis; L-proline biosynthesis; L-glutamate 5-semialdehyde from L-glutamate: step 2/2. Catalyzes the NADPH-dependent reduction of L-glutamate 5-phosphate into L-glutamate 5-semialdehyde and phosphate. The product spontaneously undergoes cyclization to form 1-pyrroline-5-carboxylate. The protein is Gamma-glutamyl phosphate reductase of Paracidovorax citrulli (strain AAC00-1) (Acidovorax citrulli).